The chain runs to 369 residues: Flagellar P-ring protein (369 aa).

The N-terminal stretch at 1-22 (MIKLKQLIAATLLLSTAFGVHA) is a signal peptide.

The protein belongs to the FlgI family. As to quaternary structure, the basal body constitutes a major portion of the flagellar organelle and consists of four rings (L,P,S, and M) mounted on a central rod.

It localises to the periplasm. The protein resides in the bacterial flagellum basal body. Assembles around the rod to form the L-ring and probably protects the motor/basal body from shearing forces during rotation. This chain is Flagellar P-ring protein, found in Pseudomonas syringae pv. syringae (strain B728a).